The chain runs to 574 residues: Septation ring formation regulator EzrA (574 aa).

At 1-7 (MSNGLII) the chain is on the extracellular side. Residues 8–26 (LIIVIAVALILAYVAAVVL) form a helical membrane-spanning segment. At 27-574 (RKRNETLLDS…YEKTRENIRF (548 aa)) the chain is on the cytoplasmic side. 3 coiled-coil regions span residues 104–141 (LKAK…EAKN), 267–424 (NITQ…QKVN), and 456–524 (ASDH…SIQE).

It belongs to the EzrA family.

It localises to the cell membrane. In terms of biological role, negative regulator of FtsZ ring formation; modulates the frequency and position of FtsZ ring formation. Inhibits FtsZ ring formation at polar sites. Interacts either with FtsZ or with one of its binding partners to promote depolymerization. The chain is Septation ring formation regulator EzrA from Streptococcus gordonii (strain Challis / ATCC 35105 / BCRC 15272 / CH1 / DL1 / V288).